Reading from the N-terminus, the 197-residue chain is Beta-crystallin A2 (197 aa).

Residues 1–11 (MSSAPAPGPAP) are N-terminal arm. Beta/gamma crystallin 'Greek key' domains follow at residues 12 to 52 (ASLT…KVEN) and 53 to 99 (GVWV…RPVL). The segment at 100–105 (CANHND) is connecting peptide. Beta/gamma crystallin 'Greek key' domains are found at residues 106–147 (SRVT…KVSS) and 148–196 (GAWV…RRVQ).

The protein belongs to the beta/gamma-crystallin family. As to quaternary structure, homo/heterodimer, or complexes of higher-order. The structure of beta-crystallin oligomers seems to be stabilized through interactions between the N-terminal arms.

Functionally, crystallins are the dominant structural components of the vertebrate eye lens. The protein is Beta-crystallin A2 (CRYBA2) of Homo sapiens (Human).